Consider the following 575-residue polypeptide: Serine/threonine-protein kinase YPK1 (575 aa).

The segment at 1-53 (MMSWKFGKKFKEGGFLSGKHHSSNNNSPSDTSRSTTPTPGNPHPEDAVKPPVP) is disordered. The span at 23–38 (SNNNSPSDTSRSTTPT) shows a compositional bias: low complexity. One can recognise a Protein kinase domain in the interval 245-500 (FELLKVIGKG…AQDIKNHPFF (256 aa)). Residues 251–259 (IGKGSFGKV) and Lys-274 each bind ATP. Asp-368 (proton acceptor) is an active-site residue. Residues 502–573 (KHINFTKLWN…SVSPLGESVG (72 aa)) enclose the AGC-kinase C-terminal domain. Phosphoserine occurs at positions 543 and 562.

Belongs to the protein kinase superfamily. AGC Ser/Thr protein kinase family. RAC subfamily.

The enzyme catalyses L-seryl-[protein] + ATP = O-phospho-L-seryl-[protein] + ADP + H(+). It carries out the reaction L-threonyl-[protein] + ATP = O-phospho-L-threonyl-[protein] + ADP + H(+). Probable serine/threonine-protein kinase which may act in the sphingolipid-mediated signaling pathway. May act downstream of TORC2 (TOR complex 2) and PDK1 to regulate sphingolipid metabolism. The chain is Serine/threonine-protein kinase YPK1 from Cryptococcus neoformans var. grubii serotype A (strain H99 / ATCC 208821 / CBS 10515 / FGSC 9487) (Filobasidiella neoformans var. grubii).